Here is a 316-residue protein sequence, read N- to C-terminus: tRNA dimethylallyltransferase (316 aa).

ATP is bound at residue 15–22 (GPTASGKS). 17–22 (TASGKS) is a substrate binding site. The tract at residues 40-43 (DSRQ) is interaction with substrate tRNA.

It belongs to the IPP transferase family. In terms of assembly, monomer. Requires Mg(2+) as cofactor.

It carries out the reaction adenosine(37) in tRNA + dimethylallyl diphosphate = N(6)-dimethylallyladenosine(37) in tRNA + diphosphate. Catalyzes the transfer of a dimethylallyl group onto the adenine at position 37 in tRNAs that read codons beginning with uridine, leading to the formation of N6-(dimethylallyl)adenosine (i(6)A). The protein is tRNA dimethylallyltransferase of Chlorobium limicola (strain DSM 245 / NBRC 103803 / 6330).